The following is a 311-amino-acid chain: 4-diphosphocytidyl-2-C-methyl-D-erythritol kinase (311 aa).

Residue Lys11 is part of the active site. An ATP-binding site is contributed by 94–104 (PVAAGLAGGSA). Asp136 is an active-site residue.

The protein belongs to the GHMP kinase family. IspE subfamily.

It carries out the reaction 4-CDP-2-C-methyl-D-erythritol + ATP = 4-CDP-2-C-methyl-D-erythritol 2-phosphate + ADP + H(+). The protein operates within isoprenoid biosynthesis; isopentenyl diphosphate biosynthesis via DXP pathway; isopentenyl diphosphate from 1-deoxy-D-xylulose 5-phosphate: step 3/6. Catalyzes the phosphorylation of the position 2 hydroxy group of 4-diphosphocytidyl-2C-methyl-D-erythritol. The sequence is that of 4-diphosphocytidyl-2-C-methyl-D-erythritol kinase from Synechococcus sp. (strain JA-2-3B'a(2-13)) (Cyanobacteria bacterium Yellowstone B-Prime).